A 602-amino-acid chain; its full sequence is Solute carrier organic anion transporter family member 1C1 (602 aa).

Over 1–43 (MDTSSKENIQLFCKTSVQPVGRPSFKTEYPSSEEKQPCCGELK) the chain is Cytoplasmic. Residues 44 to 63 (VFLGALSFVYFAKALAEGYL) form a helical membrane-spanning segment. At 64 to 82 (KSTITQIERRFDIPSSLVG) the chain is on the extracellular side. The helical transmembrane segment at 83–103 (VIDGSFEIGNLLVITFVSYFG) threads the bilayer. The Cytoplasmic segment spans residues 104-109 (AKLHRP). A helical membrane pass occupies residues 110–134 (KIIGAGCLIMGVGTLLIAMPQFFME). The Extracellular segment spans residues 135–139 (QYKYE). A helical transmembrane segment spans residues 140 to 156 (IYSPSSNSTLSISPCLL). Residues 157-238 (ESSSQLPVSV…ARDFLPSLKY (82 aa)) are Cytoplasmic-facing. Residues 190–216 (PRSQSREDSNSSSEKSKFIRDDHTDYQ) are disordered. Over residues 193–214 (QSREDSNSSSEKSKFIRDDHTD) the composition is skewed to basic and acidic residues. A helical membrane pass occupies residues 239–260 (LFGNPVYFLYLCTSTVQFNSLF). At 261–280 (GMVTYKPKYIEQQYGQSSSR) the chain is on the extracellular side. A helical transmembrane segment spans residues 281-304 (ANFVIGLINIPAVALGIFSGGIAM). Residues 305 to 308 (KKFR) lie on the Cytoplasmic side of the membrane. The chain crosses the membrane as a helical span at residues 309–332 (ISVCGAAKLYLGSSVFGYLLFLSL). The Extracellular portion of the chain corresponds to 333-444 (FALGCENSDV…NGCPQMFLYF (112 aa)). Residues 360 to 415 (RALFSDCNPRCKCSETKWEPMCGENGITYVSACPAGCQTSNRSGKNIIFYNCTCVG) form the Kazal-like domain. 3 disulfide bridges follow: cysteine 366–cysteine 396, cysteine 372–cysteine 392, and cysteine 381–cysteine 413. Asparagine 400, asparagine 410, and asparagine 423 each carry an N-linked (GlcNAc...) asparagine glycan. Residues 445–467 (LVISVITSYTLSLGGIPGYILLL) form a helical membrane-spanning segment. Residues 468-476 (RCIKPQLKS) lie on the Cytoplasmic side of the membrane. The helical transmembrane segment at 477 to 502 (FALGIYTLSIRVLAGIPAPVYFGVLI) threads the bilayer. At 503 to 536 (DTSCLKWGFKRCGSRGSCRLYDSNVFRHIYLGLT) the chain is on the extracellular side. Residues 537–554 (VILGTVSIFLSIAVLFIL) form a helical membrane-spanning segment. The Cytoplasmic portion of the chain corresponds to 555–602 (KKNYVSKHRNFITKRERTMVSTRFQKENCTTSDHLLQPKYWPGKETQL).

This sequence belongs to the organo anion transporter (TC 2.A.60) family.

Its subcellular location is the cell membrane. It carries out the reaction 3,3',5'-triiodo-L-thyronine(out) = 3,3',5'-triiodo-L-thyronine(in). The enzyme catalyses L-thyroxine(out) = L-thyroxine(in). The catalysed reaction is L-thyroxine sulfate(out) = L-thyroxine sulfate(in). Mediates the Na(+)-independent high affinity transport of organic anions such as the thyroid hormones L-thyroxine (T4), L-thyroxine sulfate (T4S), and 3,3',5'-triiodo-L-thyronine (reverse T3, rT3) at the plasma membrane. Regulates T4 levels in different brain regions by transporting T4, and also by serving as an export pump for T4S, which is a source of T4 after hydrolysis by local sulfatases. Increases the access of these substrates to the intracellular sites where they are metabolized by the deiodinases. Other potential substrates, such as triiodothyronine (T3), 17-beta-glucuronosyl estradiol (17beta-estradiol 17-O-(beta-D-glucuronate)), estrone-3-sulfate (E1S) and sulfobromophthalein (BSP) are transported with much lower efficiency. Transports T4 and E1S in a pH-insensitive manner. Facilitates the transport of thyroid hormones across the blood-brain barrier and into glia and neuronal cells in the brain. This is Solute carrier organic anion transporter family member 1C1 (SLCO1C1) from Macaca fascicularis (Crab-eating macaque).